The chain runs to 144 residues: Glutaredoxin-C6 (144 aa).

The Glutaredoxin domain occupies 39-143 (EAKIRRLISE…PKLVQVGALW (105 aa)). The cysteines at positions 59 and 62 are disulfide-linked.

The protein belongs to the glutaredoxin family. CC-type subfamily.

The protein localises to the cytoplasm. Its function is as follows. Has a glutathione-disulfide oxidoreductase activity in the presence of NADPH and glutathione reductase. Reduces low molecular weight disulfides and proteins. This is Glutaredoxin-C6 (GRXC6) from Arabidopsis thaliana (Mouse-ear cress).